The following is a 460-amino-acid chain: Putative type II methyltransferase M.OihORF3336P (460 aa).

The SAM-dependent MTase C5-type domain maps to 15 to 458 (PEVVDLFSGC…EAMKKNIQGG (444 aa)). Cysteine 97 is an active-site residue.

The protein belongs to the class I-like SAM-binding methyltransferase superfamily. C5-methyltransferase family.

It catalyses the reaction a 2'-deoxycytidine in DNA + S-adenosyl-L-methionine = a 5-methyl-2'-deoxycytidine in DNA + S-adenosyl-L-homocysteine + H(+). In terms of biological role, a methylase, recognizes the double-stranded sequence 5'-ACCGGT-3', methylates C-? on both strands. No endonuclease has been identified for this methylase. This chain is Putative type II methyltransferase M.OihORF3336P, found in Oceanobacillus iheyensis (strain DSM 14371 / CIP 107618 / JCM 11309 / KCTC 3954 / HTE831).